Reading from the N-terminus, the 115-residue chain is NADH-ubiquinone oxidoreductase chain 3 (115 aa).

A run of 3 helical transmembrane segments spans residues 3-23, 55-75, and 84-104; these read LMLTLLTNTLLASLLVLIAFW, FFLVAITFLLFDLEIALLLPL, and LNTMLIMALILISLLAISLAY.

It belongs to the complex I subunit 3 family. In terms of assembly, core subunit of respiratory chain NADH dehydrogenase (Complex I) which is composed of 45 different subunits. Interacts with TMEM186. Interacts with TMEM242.

Its subcellular location is the mitochondrion inner membrane. It carries out the reaction a ubiquinone + NADH + 5 H(+)(in) = a ubiquinol + NAD(+) + 4 H(+)(out). In terms of biological role, core subunit of the mitochondrial membrane respiratory chain NADH dehydrogenase (Complex I) which catalyzes electron transfer from NADH through the respiratory chain, using ubiquinone as an electron acceptor. Essential for the catalytic activity of complex I. In Equus asinus (Donkey), this protein is NADH-ubiquinone oxidoreductase chain 3.